Here is a 296-residue protein sequence, read N- to C-terminus: Lipoyl synthase (296 aa).

Residues cysteine 38, cysteine 43, cysteine 49, cysteine 64, cysteine 68, cysteine 71, and serine 279 each contribute to the [4Fe-4S] cluster site. Residues 50–268 (WDGGCLTFMV…AEYGRSLGFK (219 aa)) enclose the Radical SAM core domain.

This sequence belongs to the radical SAM superfamily. Lipoyl synthase family. Requires [4Fe-4S] cluster as cofactor.

The protein resides in the cytoplasm. The catalysed reaction is [[Fe-S] cluster scaffold protein carrying a second [4Fe-4S](2+) cluster] + N(6)-octanoyl-L-lysyl-[protein] + 2 oxidized [2Fe-2S]-[ferredoxin] + 2 S-adenosyl-L-methionine + 4 H(+) = [[Fe-S] cluster scaffold protein] + N(6)-[(R)-dihydrolipoyl]-L-lysyl-[protein] + 4 Fe(3+) + 2 hydrogen sulfide + 2 5'-deoxyadenosine + 2 L-methionine + 2 reduced [2Fe-2S]-[ferredoxin]. The protein operates within protein modification; protein lipoylation via endogenous pathway; protein N(6)-(lipoyl)lysine from octanoyl-[acyl-carrier-protein]: step 2/2. Its function is as follows. Catalyzes the radical-mediated insertion of two sulfur atoms into the C-6 and C-8 positions of the octanoyl moiety bound to the lipoyl domains of lipoate-dependent enzymes, thereby converting the octanoylated domains into lipoylated derivatives. The chain is Lipoyl synthase from Methanocella arvoryzae (strain DSM 22066 / NBRC 105507 / MRE50).